Reading from the N-terminus, the 347-residue chain is GTPase Obg (347 aa).

In terms of domain architecture, Obg spans 1 to 159 (MKFVDEATIK…RVLRLELKLL (159 aa)). The segment at 127 to 146 (NTRYKTSTNRAPRQSKPGTP) is disordered. Residues 129-138 (RYKTSTNRAP) are compositionally biased toward polar residues. The OBG-type G domain occupies 160 to 334 (ADVGLLGLPN…LMQAIMKYLE (175 aa)). GTP contacts are provided by residues 166–173 (GLPNAGKS), 191–195 (FTTLY), 213–216 (DIPG), 284–287 (NKID), and 315–317 (SAA). 2 residues coordinate Mg(2+): Ser173 and Thr193.

This sequence belongs to the TRAFAC class OBG-HflX-like GTPase superfamily. OBG GTPase family. In terms of assembly, monomer. The cofactor is Mg(2+).

The protein localises to the cytoplasm. Functionally, an essential GTPase which binds GTP, GDP and possibly (p)ppGpp with moderate affinity, with high nucleotide exchange rates and a fairly low GTP hydrolysis rate. Plays a role in control of the cell cycle, stress response, ribosome biogenesis and in those bacteria that undergo differentiation, in morphogenesis control. The chain is GTPase Obg from Thioalkalivibrio sulfidiphilus (strain HL-EbGR7).